We begin with the raw amino-acid sequence, 414 residues long: Probable acetyl-CoA acetyltransferase (414 aa).

Cysteine 110 functions as the Acyl-thioester intermediate in the catalytic mechanism. CoA-binding positions include tyrosine 205, 244 to 246 (KVL), and lysine 249. Tyrosine 205 serves as a coordination point for K(+). Alanine 266 and alanine 268 together coordinate K(+). Serine 269 contributes to the CoA binding site. Valine 366 contacts K(+). Active-site proton acceptor residues include histidine 370 and cysteine 400.

This sequence belongs to the thiolase-like superfamily. Thiolase family.

The catalysed reaction is 2 acetyl-CoA = acetoacetyl-CoA + CoA. This Dictyostelium discoideum (Social amoeba) protein is Probable acetyl-CoA acetyltransferase.